The primary structure comprises 90 residues: DNA-binding protein HU-1 (90 aa).

T4 carries the post-translational modification Phosphothreonine. A disordered region spans residues 55-90 (RSARKGRNPQTGEEIEIPATKNPAFKPGKQLKDAVN).

Belongs to the bacterial histone-like protein family. In terms of assembly, homodimer.

Functionally, histone-like DNA-binding protein which is capable of wrapping DNA to stabilize it, and thus to prevent its denaturation under extreme environmental conditions. The sequence is that of DNA-binding protein HU-1 (hup1) from Halalkalibacterium halodurans (strain ATCC BAA-125 / DSM 18197 / FERM 7344 / JCM 9153 / C-125) (Bacillus halodurans).